The sequence spans 80 residues: Exodeoxyribonuclease 7 small subunit (80 aa).

The tract at residues 60-80 (LIDSDGTEHNLDPNNASAPEE) is disordered. Residues 61 to 70 (IDSDGTEHNL) show a composition bias toward basic and acidic residues. Positions 71 to 80 (DPNNASAPEE) are enriched in polar residues.

Belongs to the XseB family. As to quaternary structure, heterooligomer composed of large and small subunits.

The protein localises to the cytoplasm. The catalysed reaction is Exonucleolytic cleavage in either 5'- to 3'- or 3'- to 5'-direction to yield nucleoside 5'-phosphates.. In terms of biological role, bidirectionally degrades single-stranded DNA into large acid-insoluble oligonucleotides, which are then degraded further into small acid-soluble oligonucleotides. The polypeptide is Exodeoxyribonuclease 7 small subunit (Lactobacillus acidophilus (strain ATCC 700396 / NCK56 / N2 / NCFM)).